A 457-amino-acid chain; its full sequence is Metacaspase-1 (457 aa).

The tract at residues 1–149 (MSWNQYPGGG…PQLQGQGGQS (149 aa)) is disordered. A compositionally biased stretch (gly residues) spans 7-18 (PGGGHHQQGGYG). Pro residues predominate over residues 20 to 56 (RPPPPQWAQQGPPPPPNMGYRPPPPPQAYYNNPPPPQ). The segment covering 57-83 (QYQRPAPQQNGYQQGGYQQQQQSQGNY) has biased composition (low complexity). Catalysis depends on residues H247 and C303.

It belongs to the peptidase C14B family.

Involved in cell death (apoptosis). The polypeptide is Metacaspase-1 (MCA1) (Cryptococcus neoformans var. neoformans serotype D (strain JEC21 / ATCC MYA-565) (Filobasidiella neoformans)).